Reading from the N-terminus, the 1090-residue chain is UPF0507 protein SCY_4172 (1090 aa).

Positions 289-436 (FSVNQLLTDF…FEDFNKNTGN (148 aa)) constitute a VPS9 domain.

This sequence belongs to the UPF0507 family.

This chain is UPF0507 protein SCY_4172, found in Saccharomyces cerevisiae (strain YJM789) (Baker's yeast).